The sequence spans 84 residues: uncharacterized protein (84 aa).

Transmembrane regions (helical) follow at residues 8–28 (IYFFTIACIIAVIYCVLVNLL), 30–50 (INVIPVVLAFSLILILTISTI), and 63–83 (VLFMLLVLAFFAYAIYKLYIP).

The protein resides in the cell membrane. This is an uncharacterized protein from Methanocaldococcus jannaschii (strain ATCC 43067 / DSM 2661 / JAL-1 / JCM 10045 / NBRC 100440) (Methanococcus jannaschii).